Here is a 94-residue protein sequence, read N- to C-terminus: Co-chaperonin GroES (94 aa).

This sequence belongs to the GroES chaperonin family. Heptamer of 7 subunits arranged in a ring. Interacts with the chaperonin GroEL.

It is found in the cytoplasm. Functionally, together with the chaperonin GroEL, plays an essential role in assisting protein folding. The GroEL-GroES system forms a nano-cage that allows encapsulation of the non-native substrate proteins and provides a physical environment optimized to promote and accelerate protein folding. GroES binds to the apical surface of the GroEL ring, thereby capping the opening of the GroEL channel. This chain is Co-chaperonin GroES, found in Lactobacillus delbrueckii subsp. bulgaricus (strain ATCC BAA-365 / Lb-18).